The sequence spans 220 residues: Phosphopantothenoylcysteine decarboxylase (220 aa).

Residues 29-31 and 54-56 each bind FMN; these read GSV and TKA. The Proton donor role is filled by histidine 91. FMN contacts are provided by residues 107–110 and alanine 141; that span reads SANT. 3 residues coordinate N-[(R)-4-phosphopantothenoyl]-L-cysteine: asparagine 143, arginine 173, and alanine 175. Cysteine 176 acts as the Proton donor in catalysis. Methionine 184 is an N-[(R)-4-phosphopantothenoyl]-L-cysteine binding site.

It belongs to the HFCD (homooligomeric flavin containing Cys decarboxylase) superfamily. As to quaternary structure, forms homotrimers. Interacts with HIP1. Interacts with HD1 in the dark. The cofactor is FMN. As to expression, expressed in root meristem, shoot apical meristem (SAM), intercalary meristem, floral meristem, embryo and tip of the coleoptile before true leaf emergence.

It localises to the nucleus. The catalysed reaction is N-[(R)-4-phosphopantothenoyl]-L-cysteine + H(+) = (R)-4'-phosphopantetheine + CO2. It participates in cofactor biosynthesis; coenzyme A biosynthesis; CoA from (R)-pantothenate: step 3/5. Functionally, catalyzes the decarboxylation of 4'-phosphopantothenoylcysteine to 4'-phosphopantetheine, a key step in coenzyme A biosynthesis. Involved in salt and osmotic tolerance, and light-regulated plant growth. Trimerization of HAL3 recruits and activates the E3 ubiquitin-protein ligase HIP1, which leads to the degradation of cell cycle suppressors, resulting in enhancement of cell division and plant growth. HAL3 function in cell division seems to be independent from its PPC decarboxylase activity. Acts as a positive regulator of flowering by binding to HD1 in the dark. This Oryza sativa subsp. japonica (Rice) protein is Phosphopantothenoylcysteine decarboxylase.